The following is a 990-amino-acid chain: Bifunctional glutamine synthetase adenylyltransferase/adenylyl-removing enzyme (990 aa).

Positions 1-474 (MIFSAITADL…HYAKLFEGDP (474 aa)) are adenylyl removase. The tract at residues 478 to 990 (AKLPPVDYGA…FNRLIGGEDA (513 aa)) is adenylyl transferase.

The protein belongs to the GlnE family. Mg(2+) serves as cofactor.

The enzyme catalyses [glutamine synthetase]-O(4)-(5'-adenylyl)-L-tyrosine + phosphate = [glutamine synthetase]-L-tyrosine + ADP. It catalyses the reaction [glutamine synthetase]-L-tyrosine + ATP = [glutamine synthetase]-O(4)-(5'-adenylyl)-L-tyrosine + diphosphate. Its function is as follows. Involved in the regulation of glutamine synthetase GlnA, a key enzyme in the process to assimilate ammonia. When cellular nitrogen levels are high, the C-terminal adenylyl transferase (AT) inactivates GlnA by covalent transfer of an adenylyl group from ATP to specific tyrosine residue of GlnA, thus reducing its activity. Conversely, when nitrogen levels are low, the N-terminal adenylyl removase (AR) activates GlnA by removing the adenylyl group by phosphorolysis, increasing its activity. The regulatory region of GlnE binds the signal transduction protein PII (GlnB) which indicates the nitrogen status of the cell. In Rhodopseudomonas palustris (strain TIE-1), this protein is Bifunctional glutamine synthetase adenylyltransferase/adenylyl-removing enzyme.